We begin with the raw amino-acid sequence, 165 residues long: Phosphopantetheine adenylyltransferase (165 aa).

A substrate-binding site is contributed by Thr10. ATP is bound by residues 10–11 (TF) and His18. Residues Lys42, Leu75, and Arg89 each coordinate substrate. Residues 90–92 (GVR), Glu100, and 125–131 (VSFISSS) contribute to the ATP site.

This sequence belongs to the bacterial CoaD family. Homohexamer. Mg(2+) is required as a cofactor.

It localises to the cytoplasm. It carries out the reaction (R)-4'-phosphopantetheine + ATP + H(+) = 3'-dephospho-CoA + diphosphate. The protein operates within cofactor biosynthesis; coenzyme A biosynthesis; CoA from (R)-pantothenate: step 4/5. In terms of biological role, reversibly transfers an adenylyl group from ATP to 4'-phosphopantetheine, yielding dephospho-CoA (dPCoA) and pyrophosphate. This Buchnera aphidicola subsp. Acyrthosiphon pisum (strain 5A) protein is Phosphopantetheine adenylyltransferase.